The chain runs to 205 residues: Holliday junction branch migration complex subunit RuvA (205 aa).

The tract at residues 1–64 is domain I; that stretch reads MIGKLKGVVD…EDMIRLYGFR (64 aa). The interval 65-143 is domain II; sequence SDAEREWFRL…AFAPVDPALV (79 aa). Residues 144–152 form a flexible linker region; the sequence is RLAGAVEAR. Residues 153–205 are domain III; it reads TAPQPVADAISALVNLGYPQAQASAAVAAALQSAGAEAEAKTLIRLGLRELAR.

The protein belongs to the RuvA family. In terms of assembly, homotetramer. Forms an RuvA(8)-RuvB(12)-Holliday junction (HJ) complex. HJ DNA is sandwiched between 2 RuvA tetramers; dsDNA enters through RuvA and exits via RuvB. An RuvB hexamer assembles on each DNA strand where it exits the tetramer. Each RuvB hexamer is contacted by two RuvA subunits (via domain III) on 2 adjacent RuvB subunits; this complex drives branch migration. In the full resolvosome a probable DNA-RuvA(4)-RuvB(12)-RuvC(2) complex forms which resolves the HJ.

It is found in the cytoplasm. Its function is as follows. The RuvA-RuvB-RuvC complex processes Holliday junction (HJ) DNA during genetic recombination and DNA repair, while the RuvA-RuvB complex plays an important role in the rescue of blocked DNA replication forks via replication fork reversal (RFR). RuvA specifically binds to HJ cruciform DNA, conferring on it an open structure. The RuvB hexamer acts as an ATP-dependent pump, pulling dsDNA into and through the RuvAB complex. HJ branch migration allows RuvC to scan DNA until it finds its consensus sequence, where it cleaves and resolves the cruciform DNA. The sequence is that of Holliday junction branch migration complex subunit RuvA from Methylobacterium sp. (strain 4-46).